The primary structure comprises 252 residues: Aspartate/glutamate leucyltransferase (252 aa).

It belongs to the R-transferase family. Bpt subfamily.

The protein resides in the cytoplasm. The catalysed reaction is N-terminal L-glutamyl-[protein] + L-leucyl-tRNA(Leu) = N-terminal L-leucyl-L-glutamyl-[protein] + tRNA(Leu) + H(+). It carries out the reaction N-terminal L-aspartyl-[protein] + L-leucyl-tRNA(Leu) = N-terminal L-leucyl-L-aspartyl-[protein] + tRNA(Leu) + H(+). Functions in the N-end rule pathway of protein degradation where it conjugates Leu from its aminoacyl-tRNA to the N-termini of proteins containing an N-terminal aspartate or glutamate. This is Aspartate/glutamate leucyltransferase from Xanthomonas campestris pv. campestris (strain B100).